We begin with the raw amino-acid sequence, 1302 residues long: Multidrug resistance protein 1 (1302 aa).

A helical transmembrane segment spans residues 43–63 (GVFEIILLIIGIIGSIGVGCL). The ABC transmembrane type-1 1 domain occupies 51–360 (IIGIIGSIGV…ISTPINILNS (310 aa)). Asn83 is a glycosylation site (N-linked (GlcNAc...) asparagine). 5 consecutive transmembrane segments (helical) span residues 118–138 (LYFAIGNMVAGFLQTICFFVL), 192–212 (LFQTFSSFITGYLIGFIKCWD), 213–233 (LTLVVLCMFPFIMVSMMGLGM), 292–312 (IGIGTGLGCMMFFIMSSNALG), and 331–351 (AGTVLTVFMSVLLATQSLSQI). Positions 395-634 (IRFEDVQFVY…KGTYYGLVKR (240 aa)) constitute an ABC transporter 1 domain. 430-437 (GASGCGKS) contacts ATP. N-linked (GlcNAc...) asparagine glycosylation is present at Asn663. The helical transmembrane segment at 712–732 (YIFCTLGLIGGIGAGAAFPFY) threads the bilayer. Residues 713–1022 (IFCTLGLIGG…IGNVLPDVGK (310 aa)) form the ABC transmembrane type-1 2 domain. Asn751 is a glycosylation site (N-linked (GlcNAc...) asparagine). The helical transmembrane segment at 765 to 785 (MIIICIGIITMISFFCYVGLF) threads the bilayer. Asn808 is a glycosylation site (N-linked (GlcNAc...) asparagine). The next 2 helical transmembrane spans lie at 841 to 861 (VGDIIEIMSTVGFGFGIGLYF) and 862 to 882 (SWKLSLCILAVFPIISFFMFI). Positions 1057–1296 (IEFKNIHFRY…KGFYYTLAMQ (240 aa)) constitute an ABC transporter 2 domain. Residue 1092–1099 (GASGCGKS) participates in ATP binding.

Belongs to the ABC transporter superfamily. ABCB family. Multidrug resistance exporter (TC 3.A.1.201) subfamily.

It is found in the membrane. The catalysed reaction is ATP + H2O + xenobioticSide 1 = ADP + phosphate + xenobioticSide 2.. In terms of biological role, energy-dependent efflux pump responsible for decreased drug accumulation in multidrug resistance parasites. The sequence is that of Multidrug resistance protein 1 from Entamoeba histolytica (strain ATCC 30459 / HM-1:IMSS / ABRM).